The sequence spans 120 residues: Large ribosomal subunit protein uL18 (120 aa).

Positions 1–22 (MKLTRRESKNRRHRRVRGKVVG) are disordered. Positions 8-18 (SKNRRHRRVRG) are enriched in basic residues.

Belongs to the universal ribosomal protein uL18 family. As to quaternary structure, part of the 50S ribosomal subunit; part of the 5S rRNA/L5/L18/L25 subcomplex. Contacts the 5S and 23S rRNAs.

In terms of biological role, this is one of the proteins that bind and probably mediate the attachment of the 5S RNA into the large ribosomal subunit, where it forms part of the central protuberance. The sequence is that of Large ribosomal subunit protein uL18 from Nostoc punctiforme (strain ATCC 29133 / PCC 73102).